We begin with the raw amino-acid sequence, 424 residues long: Probable serine/threonine-protein kinase PBL15 (424 aa).

The Protein kinase domain occupies 99–380 (FSGNYLLGEG…AVVEALESLI (282 aa)). ATP-binding positions include 105 to 113 (LGEGGFGKV) and Lys-134. A Phosphotyrosine modification is found at Tyr-179. Residue Asp-229 is the Proton acceptor of the active site. A Phosphoserine modification is found at Ser-233. Thr-264 and Thr-269 each carry phosphothreonine. A Phosphotyrosine modification is found at Tyr-277. Residues 390–424 (GHWPLSPKSQGGKVSPKVRGDHRSGRKSAPGSLRS) form a disordered region.

Belongs to the protein kinase superfamily. Ser/Thr protein kinase family. As to quaternary structure, interacts with the Xanthomonas campestris effector XopAC/AvrAC.

It localises to the cell membrane. The enzyme catalyses L-seryl-[protein] + ATP = O-phospho-L-seryl-[protein] + ADP + H(+). The catalysed reaction is L-threonyl-[protein] + ATP = O-phospho-L-threonyl-[protein] + ADP + H(+). Its function is as follows. May be involved in plant defense signaling. This Arabidopsis thaliana (Mouse-ear cress) protein is Probable serine/threonine-protein kinase PBL15.